The sequence spans 496 residues: Probable cytosol aminopeptidase (496 aa).

Positions 264 and 269 each coordinate Mn(2+). K276 is a catalytic residue. The Mn(2+) site is built by D287, D346, and E348. R350 is an active-site residue.

Belongs to the peptidase M17 family. Mn(2+) serves as cofactor.

The protein resides in the cytoplasm. It catalyses the reaction Release of an N-terminal amino acid, Xaa-|-Yaa-, in which Xaa is preferably Leu, but may be other amino acids including Pro although not Arg or Lys, and Yaa may be Pro. Amino acid amides and methyl esters are also readily hydrolyzed, but rates on arylamides are exceedingly low.. The enzyme catalyses Release of an N-terminal amino acid, preferentially leucine, but not glutamic or aspartic acids.. Presumably involved in the processing and regular turnover of intracellular proteins. Catalyzes the removal of unsubstituted N-terminal amino acids from various peptides. This Geobacter sulfurreducens (strain ATCC 51573 / DSM 12127 / PCA) protein is Probable cytosol aminopeptidase.